Reading from the N-terminus, the 313-residue chain is Ribosomal RNA small subunit methyltransferase H (313 aa).

S-adenosyl-L-methionine-binding positions include 37–39, D57, F83, D104, and Q111; that span reads GGH.

The protein belongs to the methyltransferase superfamily. RsmH family.

The protein localises to the cytoplasm. The catalysed reaction is cytidine(1402) in 16S rRNA + S-adenosyl-L-methionine = N(4)-methylcytidine(1402) in 16S rRNA + S-adenosyl-L-homocysteine + H(+). In terms of biological role, specifically methylates the N4 position of cytidine in position 1402 (C1402) of 16S rRNA. This Mycoplasmoides gallisepticum (strain R(low / passage 15 / clone 2)) (Mycoplasma gallisepticum) protein is Ribosomal RNA small subunit methyltransferase H.